Here is a 414-residue protein sequence, read N- to C-terminus: MVLGKVKSLTISFDCLNDSNVPVYSSGDTVSGRVNLEVTGEIRVKSLKIHARGHAKVRWTESRNAGSNTAYTQNYTEEVEYFNHKDILIGHERDDDNSEEGFNTIHSGRHEYAFSFELPQTPLATSFEGRHGSVRYWVKAELHRPWLLPVKLKKEFTVFEHIDINTPSLLSPQAGTKEKTLYCWFCTSGPISLSAKIERKGYTPGESIQIFAEIENCSSRMVVPKAAIYQTQAFYAKGKMKEVKQLVANLRGESLSSGKTETWNGKLLKIPPVSPSILDCSIIRVEYSLMVYVDIPGAMDLFLNLPLVIGTIPLHPFGSRTSSVSSQCSMNMNWLGLSLPERPEAPPSYAEVVTEEQRRNNLAPGSACDDFERALQGPLFAYIQEFRFLPPPLYSEIDPNPDQPADDRPSCPSR.

Short sequence motifs (PPxY motif) lie at residues 346–349 and 391–394; these read PPSY and PPLY. Residues 393–414 are disordered; that stretch reads LYSEIDPNPDQPADDRPSCPSR. Over residues 405–414 the composition is skewed to basic and acidic residues; the sequence is ADDRPSCPSR.

The protein belongs to the arrestin family. Interacts (via PPxY motifs) with NEDD4 (via WW domains). Interacts with ADRB2. Interacts with ADRB3. Interacts with HGS (via PPxY motifs). Does not bind TXN (thioredoxin). Interacts with ITCH.

Its subcellular location is the cytoplasm. The protein resides in the cell membrane. It localises to the lysosome. It is found in the endosome. The protein localises to the early endosome. Its function is as follows. Adapter protein that plays a role in regulating cell-surface expression of adrenergic receptors and probably also other G protein-coupled receptors. Plays a role in NEDD4-mediated ubiquitination and endocytosis af activated ADRB2 and subsequent ADRB2 degradation. May recruit NEDD4 to ADRB2. Alternatively, may function as adapter protein that does not play a major role in recruiting NEDD4 to ADRB2, but rather plays a role in a targeting ADRB2 to endosomes. The polypeptide is Arrestin domain-containing protein 3 (ARRDC3) (Bos taurus (Bovine)).